Reading from the N-terminus, the 174-residue chain is Pectinesterase inhibitor 12 (174 aa).

Residues Met-1–Ala-20 form the signal peptide. Intrachain disulfides connect Cys-28/Cys-43 and Cys-100/Cys-140. Asn-129 carries N-linked (GlcNAc...) asparagine glycosylation.

The protein belongs to the PMEI family.

The protein localises to the secreted. It localises to the extracellular space. The protein resides in the apoplast. Its function is as follows. Pectin methylesterase (PME) inhibitor involved in the maintenance of cell wall integrity in response to necrotrophic pathogens. Modulates PME activity and pectin methylesterification during infection by Botrytis cinerea and contributes to resistance against the pathogen. The chain is Pectinesterase inhibitor 12 from Arabidopsis thaliana (Mouse-ear cress).